The primary structure comprises 467 residues: Chromosomal replication initiator protein DnaA (467 aa).

A domain I, interacts with DnaA modulators region spans residues 1-74 (MSADVWSQGC…ESVLSDLAGK (74 aa)). Residues 74–130 (KPVRLDLQLAAREAPPRPSSDAPRSNGHPQAAGQWLGAPSSSNAGAYTQASAPTPTH) form a domain II region. The tract at residues 85-127 (REAPPRPSSDAPRSNGHPQAAGQWLGAPSSSNAGAYTQASAPT) is disordered. Polar residues predominate over residues 112–127 (PSSSNAGAYTQASAPT). A domain III, AAA+ region region spans residues 131–347 (RLNTALTFDT…GALRKVLAYA (217 aa)). Gly-175, Gly-177, Lys-178, and Thr-179 together coordinate ATP. A domain IV, binds dsDNA region spans residues 348-467 (RFSQKDINIA…LHVLEQTLKG (120 aa)).

It belongs to the DnaA family. In terms of assembly, oligomerizes as a right-handed, spiral filament on DNA at oriC.

Its subcellular location is the cytoplasm. Functionally, plays an essential role in the initiation and regulation of chromosomal replication. ATP-DnaA binds to the origin of replication (oriC) to initiate formation of the DNA replication initiation complex once per cell cycle. Binds the DnaA box (a 9 base pair repeat at the origin) and separates the double-stranded (ds)DNA. Forms a right-handed helical filament on oriC DNA; dsDNA binds to the exterior of the filament while single-stranded (ss)DNA is stabiized in the filament's interior. The ATP-DnaA-oriC complex binds and stabilizes one strand of the AT-rich DNA unwinding element (DUE), permitting loading of DNA polymerase. After initiation quickly degrades to an ADP-DnaA complex that is not apt for DNA replication. Binds acidic phospholipids. This is Chromosomal replication initiator protein DnaA from Methylibium petroleiphilum (strain ATCC BAA-1232 / LMG 22953 / PM1).